We begin with the raw amino-acid sequence, 517 residues long: Steroid 17-alpha-hydroxylase/17,20 lyase (517 aa).

A heme-binding site is contributed by Cys451.

It belongs to the cytochrome P450 family. It depends on heme as a cofactor.

It localises to the membrane. The catalysed reaction is a C21-steroid + reduced [NADPH--hemoprotein reductase] + O2 = a 17alpha-hydroxy-C21-steroid + oxidized [NADPH--hemoprotein reductase] + H2O + H(+). The enzyme catalyses 17alpha-hydroxyprogesterone + reduced [NADPH--hemoprotein reductase] + O2 = androst-4-ene-3,17-dione + acetate + oxidized [NADPH--hemoprotein reductase] + H2O + 2 H(+). It carries out the reaction 17alpha-hydroxypregnenolone + reduced [NADPH--hemoprotein reductase] + O2 = 3beta-hydroxyandrost-5-en-17-one + acetate + oxidized [NADPH--hemoprotein reductase] + H2O + 2 H(+). The protein operates within lipid metabolism; steroid biosynthesis. Functionally, conversion of pregnenolone and progesterone to their 17-alpha-hydroxylated products and subsequently to dehydroepiandrosterone (DHEA) and androstenedione. Catalyzes both the 17-alpha-hydroxylation and the 17,20-lyase reaction. The polypeptide is Steroid 17-alpha-hydroxylase/17,20 lyase (cyp17a1) (Oryzias latipes (Japanese rice fish)).